Here is a 999-residue protein sequence, read N- to C-terminus: Transcription-repair-coupling factor (999 aa).

In terms of domain architecture, Helicase ATP-binding spans 499 to 656; sequence DLSSHRVMDR…LSQIKGISSL (158 aa). An ATP-binding site is contributed by 512–519; that stretch reads GDVGFGKT. The short motif at 609–612 is the DEEH box element; that stretch reads DEEH. In terms of domain architecture, Helicase C-terminal spans 677–833; the sequence is LLKEIIYREL…SVAYHDLEIR (157 aa).

In the N-terminal section; belongs to the UvrB family. It in the C-terminal section; belongs to the helicase family. RecG subfamily.

It is found in the cytoplasm. Its function is as follows. Couples transcription and DNA repair by recognizing RNA polymerase (RNAP) stalled at DNA lesions. Mediates ATP-dependent release of RNAP and its truncated transcript from the DNA, and recruitment of nucleotide excision repair machinery to the damaged site. This chain is Transcription-repair-coupling factor, found in Helicobacter pylori (strain ATCC 700392 / 26695) (Campylobacter pylori).